The chain runs to 382 residues: Lipid-A-disaccharide synthase (382 aa).

This sequence belongs to the LpxB family.

The catalysed reaction is 2-N,3-O-bis[(3R)-3-hydroxytetradecanoyl]-alpha-D-glucosaminyl 1-phosphate + UDP-2-N,3-O-bis[(3R)-3-hydroxytetradecanoyl]-alpha-D-glucosamine = lipid A disaccharide (E. coli) + UDP + H(+). It catalyses the reaction a lipid X + a UDP-2-N,3-O-bis[(3R)-3-hydroxyacyl]-alpha-D-glucosamine = a lipid A disaccharide + UDP + H(+). It participates in glycolipid biosynthesis; lipid IV(A) biosynthesis; lipid IV(A) from (3R)-3-hydroxytetradecanoyl-[acyl-carrier-protein] and UDP-N-acetyl-alpha-D-glucosamine: step 5/6. In terms of biological role, condensation of UDP-2,3-diacylglucosamine and 2,3-diacylglucosamine-1-phosphate to form lipid A disaccharide, a precursor of lipid A, a phosphorylated glycolipid that anchors the lipopolysaccharide to the outer membrane of the cell. In Shigella flexneri, this protein is Lipid-A-disaccharide synthase.